Reading from the N-terminus, the 1537-residue chain is Isocyanide synthase-NRPS hybrid crmA (1537 aa).

Residues 1–502 (MFHKEAGISH…CVKAGYAALF (502 aa)) form an isocyanide synthase domain region. Residues 351–391 (PSVPVSPGMSSPSAASTSSSGASMQGSAATTPETHSPPTFT) form a disordered region. A compositionally biased stretch (low complexity) spans 352 to 381 (SVPVSPGMSSPSAASTSSSGASMQGSAATT). The segment covering 382–391 (PETHSPPTFT) has biased composition (polar residues). The interval 573–752 (EAINDPFCFL…GNLIPPREDW (180 aa)) is adenylation. The 79-residue stretch at 941-1019 (SSAHSIEDNV…RLSAIIALLA (79 aa)) folds into the Carrier domain. An O-(pantetheine 4'-phosphoryl)serine modification is found at Ser-977. The segment at 1293–1526 (RCLKTTMFLV…LEMLVTDEEF (234 aa)) is transferase.

It in the N-terminal section; belongs to the isocyanide synthase family. This sequence in the C-terminal section; belongs to the NRP synthetase family.

Its pathway is secondary metabolite biosynthesis. Isocyanide synthase-NRPS hybrid; part of the crm gene cluster that mediates the biosynthesis of a yet unidentified copper-responsive metabolite. Converts valine into valine isocyanide that then contributes to two distinct biosynthetic pathways under copper-limiting conditions. Reaction of valine isocyanide with the imine intermediate of festuclavine results in formation of the amide bond in fumivaline A. In addition, valine isocyanide contributes to biosynthesis of a family of acylated sugar alcohols, the D-mannitol-derived fumicicolins. CrmA and associated products inhibit microbial growth from copper-starved A.fumigatus. The polypeptide is Isocyanide synthase-NRPS hybrid crmA (Aspergillus fumigatus (strain ATCC MYA-4609 / CBS 101355 / FGSC A1100 / Af293) (Neosartorya fumigata)).